A 306-amino-acid polypeptide reads, in one-letter code: D-alanine--D-alanine ligase (306 aa).

In terms of domain architecture, ATP-grasp spans 101-303 (KQVWQGIGLT…FSQLVVKILE (203 aa)). 134–189 (VADLGLPLIVKPSLEGSSVGMTKVNEISELRGALEAAFRYDVDLLVEKWLHGPEYT) provides a ligand contact to ATP. Residues aspartate 257, glutamate 270, and asparagine 272 each coordinate Mg(2+).

The protein belongs to the D-alanine--D-alanine ligase family. Requires Mg(2+) as cofactor. It depends on Mn(2+) as a cofactor.

The protein resides in the cytoplasm. The enzyme catalyses 2 D-alanine + ATP = D-alanyl-D-alanine + ADP + phosphate + H(+). Its pathway is cell wall biogenesis; peptidoglycan biosynthesis. Its function is as follows. Cell wall formation. The protein is D-alanine--D-alanine ligase of Photorhabdus laumondii subsp. laumondii (strain DSM 15139 / CIP 105565 / TT01) (Photorhabdus luminescens subsp. laumondii).